The primary structure comprises 135 residues: UPF0102 protein Mjls_1965 (135 aa).

This sequence belongs to the UPF0102 family.

This chain is UPF0102 protein Mjls_1965, found in Mycobacterium sp. (strain JLS).